A 209-amino-acid chain; its full sequence is Glutathione S-transferase 1-1 (209 aa).

The GST N-terminal domain occupies 1-81 (MADFYYLPGS…YLVEKYGKTD (81 aa)). Glutathione is bound by residues 51-53 (HTI) and 65-67 (ESR). The GST C-terminal domain occupies 87–209 (CPKKRAVINQ…GCLEFKKYFE (123 aa)).

This sequence belongs to the GST superfamily. Theta family. Homodimer.

It catalyses the reaction RX + glutathione = an S-substituted glutathione + a halide anion + H(+). Its function is as follows. Conjugation of reduced glutathione to a wide number of exogenous and endogenous hydrophobic electrophiles. This is Glutathione S-transferase 1-1 (GstD1) from Drosophila yakuba (Fruit fly).